We begin with the raw amino-acid sequence, 375 residues long: Neutral protease 2 homolog MGYG_00813 (375 aa).

A signal peptide spans 1-19; it reads MQVIVALAALSSLAAPALG. Residues 20–190 constitute a propeptide that is removed on maturation; it reads FSIPRGVPVS…SGPLTRIGKR (171 aa). 2 disulfide bridges follow: C198-C268 and C275-C293. H318 lines the Zn(2+) pocket. E319 is a catalytic residue. Residues H322 and D333 each coordinate Zn(2+).

It belongs to the peptidase M35 family. Zn(2+) serves as cofactor.

Its subcellular location is the secreted. The enzyme catalyses Preferential cleavage of bonds with hydrophobic residues in P1'. Also 3-Asn-|-Gln-4 and 8-Gly-|-Ser-9 bonds in insulin B chain.. Its function is as follows. Secreted metalloproteinase that allows assimilation of proteinaceous substrates. Shows high activities on basic nuclear substrates such as histone and protamine. May be involved in virulence. This Arthroderma gypseum (strain ATCC MYA-4604 / CBS 118893) (Microsporum gypseum) protein is Neutral protease 2 homolog MGYG_00813.